A 319-amino-acid chain; its full sequence is MSAALAAAVQPSAPASAQTADRLSHLKRLEAEAIHIFRETVAETENPVMLYSIGKDSSVLLHLALKAFAPGRLPFPLLHVDTTWKFREMIAFRDARAKELGLDLLVHTNPDGLARGVGPVSHGSEVHTDVMKTQALRQALDKHKFDAAFGGARRDEEASRAKERIISLRTAQHRWDPKRQRAEPWHLYNLKKKRGESLRVFPLSNWTELDIWLYIEQENIPIVPLYFAQERPVVEREGQLIMVDDERLPLEPGETPQQRLVRFRTLGCYPLTGAVESDAATLPEIIGETLAARTSERQGRVIDKDGAGAMERKKQEGYF.

This sequence belongs to the PAPS reductase family. CysD subfamily. Heterodimer composed of CysD, the smaller subunit, and CysN.

It carries out the reaction sulfate + ATP + H(+) = adenosine 5'-phosphosulfate + diphosphate. Its pathway is sulfur metabolism; hydrogen sulfide biosynthesis; sulfite from sulfate: step 1/3. Its function is as follows. With CysN forms the ATP sulfurylase (ATPS) that catalyzes the adenylation of sulfate producing adenosine 5'-phosphosulfate (APS) and diphosphate, the first enzymatic step in sulfur assimilation pathway. APS synthesis involves the formation of a high-energy phosphoric-sulfuric acid anhydride bond driven by GTP hydrolysis by CysN coupled to ATP hydrolysis by CysD. The polypeptide is Sulfate adenylyltransferase subunit 2 (Methylobacterium radiotolerans (strain ATCC 27329 / DSM 1819 / JCM 2831 / NBRC 15690 / NCIMB 10815 / 0-1)).